Consider the following 360-residue polypeptide: Phospho-N-acetylmuramoyl-pentapeptide-transferase (360 aa).

10 helical membrane passes run 27-47 (GALI…ISSL), 70-90 (GTPT…SILW), 93-113 (LSSV…AIGF), 134-154 (LALE…AGQE), 168-188 (LLLN…VGAG), 205-225 (VMVA…AIFA), 239-259 (LSVI…FNAP), 262-282 (AIFM…TVAV), 288-308 (IVLA…IIQV), and 337-357 (QVVI…LSTL).

This sequence belongs to the glycosyltransferase 4 family. MraY subfamily. Mg(2+) is required as a cofactor.

It localises to the cell inner membrane. It catalyses the reaction UDP-N-acetyl-alpha-D-muramoyl-L-alanyl-gamma-D-glutamyl-meso-2,6-diaminopimeloyl-D-alanyl-D-alanine + di-trans,octa-cis-undecaprenyl phosphate = di-trans,octa-cis-undecaprenyl diphospho-N-acetyl-alpha-D-muramoyl-L-alanyl-D-glutamyl-meso-2,6-diaminopimeloyl-D-alanyl-D-alanine + UMP. It participates in cell wall biogenesis; peptidoglycan biosynthesis. In terms of biological role, catalyzes the initial step of the lipid cycle reactions in the biosynthesis of the cell wall peptidoglycan: transfers peptidoglycan precursor phospho-MurNAc-pentapeptide from UDP-MurNAc-pentapeptide onto the lipid carrier undecaprenyl phosphate, yielding undecaprenyl-pyrophosphoryl-MurNAc-pentapeptide, known as lipid I. The polypeptide is Phospho-N-acetylmuramoyl-pentapeptide-transferase (Chelativorans sp. (strain BNC1)).